Consider the following 640-residue polypeptide: Leucine-rich repeat-containing protein 4C (640 aa).

Residues 1-44 form the signal peptide; the sequence is MLNKMTLHPQQIMIGPRFNRALFDPLLVVLLALQLLVVAGLVRA. The LRRNT domain maps to 45–76; that stretch reads QTCPSVCSCSNQFSKVICVRKNLREVPDGIST. LRR repeat units follow at residues 77–98, 101–122, 125–146, 149–170, 173–195, 198–219, 220–241, 244–265, and 268–289; these read NTRL…SFKH, HLEI…AFNG, NLNT…AFVY, KLKE…AFNR, SLRR…AFEG, NLRY…TPLI, KLDE…SFQG, HLQK…AFDN, and SLVE…LFTP. Residues 301 to 353 form the LRRCT domain; that stretch reads NPWNCNCDILWLSWWIKDMAPSNTACCARCNTPPNLKGRYIGELDQNYFTCYA. In terms of domain architecture, Ig-like C2-type spans 354–442; it reads PVIVEPPADL…GNTTASATLN (89 aa). C375 and C426 are disulfide-bonded. The segment at 463–483 is disordered; it reads EPSQDEARTTDNNVGPTPVVD. The helical transmembrane segment at 528 to 548 threads the bilayer; it reads IIIGCFVAITLMAAVMLVIFY. Position 631 is a phosphoserine (S631).

In terms of assembly, interacts with NTNG1 and WHRN. Highly expressed in the cerebral cortex, including frontal, parietal and occipital lobes. Putamen, amygdala, hippocampus and medulla oblongata show moderate expression. Caudate nucleus and thalamus express small amounts, whereas other brain regions show very weak or no expression.

It localises to the postsynaptic cell membrane. Functionally, may promote neurite outgrowth of developing thalamic neurons. The chain is Leucine-rich repeat-containing protein 4C (LRRC4C) from Homo sapiens (Human).